The sequence spans 72 residues: uncharacterized protein (72 aa).

This is an uncharacterized protein from Saccharomyces cerevisiae (strain ATCC 204508 / S288c) (Baker's yeast).